A 141-amino-acid chain; its full sequence is Nucleoside triphosphatase NudI (141 aa).

The region spanning 1-141 (MRQRTIVCPL…RKTLRLKGLL (141 aa)) is the Nudix hydrolase domain. The Nudix box motif lies at 38–59 (GGVESGERIEEALRREIREELG).

Belongs to the Nudix hydrolase family. NudI subfamily. In terms of assembly, monomer. Mg(2+) serves as cofactor.

It carries out the reaction a ribonucleoside 5'-triphosphate + H2O = a ribonucleoside 5'-phosphate + diphosphate + H(+). It catalyses the reaction a 2'-deoxyribonucleoside 5'-triphosphate + H2O = a 2'-deoxyribonucleoside 5'-phosphate + diphosphate + H(+). The enzyme catalyses dUTP + H2O = dUMP + diphosphate + H(+). The catalysed reaction is dTTP + H2O = dTMP + diphosphate + H(+). It carries out the reaction dCTP + H2O = dCMP + diphosphate + H(+). Functionally, catalyzes the hydrolysis of nucleoside triphosphates, with a preference for pyrimidine deoxynucleoside triphosphates (dUTP, dTTP and dCTP). The polypeptide is Nucleoside triphosphatase NudI (Shigella flexneri serotype 5b (strain 8401)).